The primary structure comprises 176 residues: ATP-dependent protease subunit HslV (176 aa).

The active site involves Thr-2. Gly-157, Cys-160, and Thr-163 together coordinate Na(+).

The protein belongs to the peptidase T1B family. HslV subfamily. As to quaternary structure, a double ring-shaped homohexamer of HslV is capped on each side by a ring-shaped HslU homohexamer. The assembly of the HslU/HslV complex is dependent on binding of ATP.

The protein resides in the cytoplasm. The enzyme catalyses ATP-dependent cleavage of peptide bonds with broad specificity.. With respect to regulation, allosterically activated by HslU binding. In terms of biological role, protease subunit of a proteasome-like degradation complex believed to be a general protein degrading machinery. This is ATP-dependent protease subunit HslV from Marinobacter nauticus (strain ATCC 700491 / DSM 11845 / VT8) (Marinobacter aquaeolei).